Reading from the N-terminus, the 104-residue chain is Nucleoid-associated protein Dtur_0258 (104 aa).

A disordered region spans residues 84 to 104 (EKSAEKMGSLTDGLPLPPGLF).

Belongs to the YbaB/EbfC family. Homodimer.

The protein resides in the cytoplasm. It localises to the nucleoid. Functionally, binds to DNA and alters its conformation. May be involved in regulation of gene expression, nucleoid organization and DNA protection. The protein is Nucleoid-associated protein Dtur_0258 of Dictyoglomus turgidum (strain DSM 6724 / Z-1310).